A 507-amino-acid polypeptide reads, in one-letter code: Histidine ammonia-lyase (507 aa).

Residues 141 to 143 (ASG) constitute a cross-link (5-imidazolinone (Ala-Gly)). Residue serine 142 is modified to 2,3-didehydroalanine (Ser).

Belongs to the PAL/histidase family. Post-translationally, contains an active site 4-methylidene-imidazol-5-one (MIO), which is formed autocatalytically by cyclization and dehydration of residues Ala-Ser-Gly.

The protein resides in the cytoplasm. It carries out the reaction L-histidine = trans-urocanate + NH4(+). The protein operates within amino-acid degradation; L-histidine degradation into L-glutamate; N-formimidoyl-L-glutamate from L-histidine: step 1/3. This Burkholderia vietnamiensis (strain G4 / LMG 22486) (Burkholderia cepacia (strain R1808)) protein is Histidine ammonia-lyase.